Here is a 76-residue protein sequence, read N- to C-terminus: Small ribosomal subunit protein bS18 (76 aa).

It belongs to the bacterial ribosomal protein bS18 family. In terms of assembly, part of the 30S ribosomal subunit. Forms a tight heterodimer with protein bS6.

Its function is as follows. Binds as a heterodimer with protein bS6 to the central domain of the 16S rRNA, where it helps stabilize the platform of the 30S subunit. This is Small ribosomal subunit protein bS18 from Alcanivorax borkumensis (strain ATCC 700651 / DSM 11573 / NCIMB 13689 / SK2).